The following is a 98-amino-acid chain: NADH-ubiquinone oxidoreductase chain 4L (98 aa).

The next 3 membrane-spanning stretches (helical) occupy residues methionine 1 to leucine 21, serine 29 to leucine 49, and isoleucine 61 to valine 81.

Belongs to the complex I subunit 4L family. Core subunit of respiratory chain NADH dehydrogenase (Complex I) which is composed of 45 different subunits.

It localises to the mitochondrion inner membrane. The catalysed reaction is a ubiquinone + NADH + 5 H(+)(in) = a ubiquinol + NAD(+) + 4 H(+)(out). In terms of biological role, core subunit of the mitochondrial membrane respiratory chain NADH dehydrogenase (Complex I) which catalyzes electron transfer from NADH through the respiratory chain, using ubiquinone as an electron acceptor. Part of the enzyme membrane arm which is embedded in the lipid bilayer and involved in proton translocation. This is NADH-ubiquinone oxidoreductase chain 4L (MT-ND4L) from Rhinolophus monoceros (Formosan lesser horseshoe bat).